We begin with the raw amino-acid sequence, 911 residues long: MEVQLGLGRVYPRPPSKTYRGAFQNLFQSVREVIQNPGPRHPEAASAAPPGASLLLQQQQQQQQQQQQQQQQQQQQQQETSPRQQQQQGEDGSPQAHRRGPTGYLVLDEEQQPSQPQSAPECHPERGCVPEPGAAVAASKGLPQQLPAPPDEDDSAAPSTLSLLGPTFPGLSSCSADLKDILSEASTMQLLQQQQQEAVSEGSSSGRAREASGAPTSSKDNYLGGTSTISDSAKELCKAVSVSMGLGVEALEHLSPGEQLRGDCMYAPLLGVPPAVRPTPCAPLAECKGSLLDDSAGKSTEDTAEYSPFKGGYTKGLEGESLGCSGSAAAGSSGTLELPSTLSLYKSGALDEAAAYQSRDYYNFPLALAGPPPPPPPPHPHARIKLENPLDYGSAWAAAAAQCRYGDLASLHGAGAAGPGSGSPSAAASSSWHTLFTAEEGQLYGPCGGGGGGGGGGGGGGGGGEAGAVAPYGYTRPPQGLAGQEGDFTAPDVWYPGGMVSRVPYPSPTCVKSEMGPWMDSYSGPYGDMRLETARDHVLPIDYYFPPQKTCLICGDEASGCHYGALTCGSCKVFFKRAAEGKQKYLCASRNDCTIDKFRRKNCPSCRLRKCYEAGMTLGARKLKKLGNLKLQEEGEASSTTSPTEETTQKLTVSHIEGYECQPIFLNVLEAIEPGVVCAGHDNNQPDSFAALLSSLNELGERQLVHVVKWAKALPGFRNLHVDDQMAVIQYSWMGLMVFAMGWRSFTNVNSRMLYFAPDLVFNEYRMHKSRMYSQCVRMRHLSQEFGWLQITPQEFLCMKALLLFSIIPVDGLKNQKFFDELRMNYIKELDRIIACKRKNPTSCSRRFYQLTKLLDSVQPIARELHQFTFDLLIKSHMVSVDFPEMMAEIISVQVPKILSGKVKPIYFHTQ.

Residues 1 to 549 (MEVQLGLGRV…PIDYYFPPQK (549 aa)) are modulating. The interval 1-578 (MEVQLGLGRV…GSCKVFFKRA (578 aa)) is interaction with ZNF318. 2 disordered regions span residues 35–164 (QNPG…LSLL) and 192–225 (QQQQ…YLGG). The segment covering 44–88 (AASAAPPGASLLLQQQQQQQQQQQQQQQQQQQQQQETSPRQQQQQ) has biased composition (low complexity). S81 is modified (phosphoserine; by CDK9). At S93 the chain carries Phosphoserine. Over residues 192–214 (QQQQQEAVSEGSSSGRAREASGA) the composition is skewed to low complexity. Over residues 215-225 (PTSSKDNYLGG) the composition is skewed to polar residues. Y222 is subject to Phosphotyrosine; by CSK. At S255 the chain carries Phosphoserine. Y266 bears the Phosphotyrosine; by CSK and TNK2 mark. Residues Y306, Y345, Y356, and Y361 each carry the phosphotyrosine; by CSK modification. Y362 carries the post-translational modification Phosphotyrosine; by CSK and TNK2. K385 is covalently cross-linked (Glycyl lysine isopeptide (Lys-Gly) (interchain with G-Cter in SUMO)). A Phosphotyrosine; by CSK modification is found at Y392. A Glycyl lysine isopeptide (Lys-Gly) (interchain with G-Cter in SUMO) cross-link involves residue K512. Residues Y526 and Y543 each carry the phosphotyrosine; by CSK modification. The interval 543–910 (YYFPPQKTCL…GKVKPIYFHT (368 aa)) is interaction with LPXN. 2 NR C4-type zinc fingers span residues 551 to 571 (CLIC…CGSC) and 587 to 611 (CASR…LRKC). Positions 551–623 (CLICGDEASG…AGMTLGARKL (73 aa)) form a DNA-binding region, nuclear receptor. Residues 563-653 (YGALTCGSCK…TEETTQKLTV (91 aa)) form an interaction with HIPK3 region. Residues 583 to 910 (QKYLCASRND…GKVKPIYFHT (328 aa)) form an interaction with CCAR1 region. Residues 616 to 910 (MTLGARKLKK…GKVKPIYFHT (295 aa)) form an interaction with KAT7 region. S642 carries the post-translational modification Phosphoserine; by STK4/MST1. Residues 660–891 (ECQPIFLNVL…DFPEMMAEII (232 aa)) form the NR LBD domain. 17beta-hydroxy-5alpha-androstan-3-one contacts are provided by N697 and R744. Glycyl lysine isopeptide (Lys-Gly) (interchain with G-Cter in ubiquitin) cross-links involve residues K837 and K839. T869 is a binding site for 17beta-hydroxy-5alpha-androstan-3-one. Position 907 is a phosphotyrosine; by CSK (Y907).

This sequence belongs to the nuclear hormone receptor family. NR3 subfamily. In terms of assembly, binds DNA as a homodimer. Part of a ternary complex containing AR, EFCAB6/DJBP and PARK7. Interacts with HIPK3 and NR0B2 in the presence of androgen. The ligand binding domain interacts with KAT7/HBO1 in the presence of dihydrotestosterone. Interacts with EFCAB6/DJBP, PQBP1, RANBP9, RBAK, SPDEF, SRA1, TGFB1I1 and RREB1. Interacts with ZMIZ1/ZIMP10 and ZMIZ2/ZMIP7 which both enhance its transactivation activity. Interacts with SLC30A9 and RAD54L2/ARIP4. Interacts with MACROD1 (via macro domain). Interacts via the ligand-binding domain with LXXLL and FXXLF motifs from NCOA1, NCOA2, NCOA3 and MAGEA11. Interacts (via nuclear receptor DNA binding domain and nuclear receptor ligand binding domain) with NCOA4. The AR N-terminal poly-Gln region binds Ran resulting in enhancement of AR-mediated transactivation. Ran-binding decreases as the poly-Gln length increases. Interacts with HIP1 (via coiled coil domain). Interacts (via ligand-binding domain) with TRIM68. Interacts with TNK2. Interacts with USP26. Interacts with RNF6. Interacts (regulated by RNF6 probably through polyubiquitination) with RNF14; regulates AR transcriptional activity. Interacts with PRMT2 and TRIM24. Interacts with RACK1. Interacts with RANBP10; this interaction enhances dihydrotestosterone-induced AR transcriptional activity. Interacts with PRPF6 in a hormone-independent way; this interaction enhances dihydrotestosterone-induced AR transcriptional activity. Interacts with STK4/MST1. Interacts with ZIPK/DAPK3. Interacts with LPXN. Interacts with MAK. Part of a complex containing AR, MAK and NCOA3. Interacts with CRY1. Interacts with CCAR1 and GATA2. Interacts with ZNF318. Interacts with BUD31. Interacts with ARID4A. Interacts with ARID4B. Interacts (via NR LBD domain) with ZBTB7A; the interaction is direct and androgen-dependent. Interacts with NCOR1. Interacts with NCOR2. Interacts with CRY2 in a ligand-dependent manner. In terms of processing, phosphorylated in prostate cancer cells in response to several growth factors including EGF. Phosphorylation is induced by c-Src kinase (CSK). Tyr-526 is one of the major phosphorylation sites and an increase in phosphorylation and Src kinase activity is associated with prostate cancer progression. Phosphorylation by TNK2 enhances the DNA-binding and transcriptional activity. Phosphorylation at Ser-81 by CDK9 regulates AR promoter selectivity and cell growth. Post-translationally, sumoylated on Lys-385 (major) and Lys-512. Ubiquitinated. Deubiquitinated by USP26. 'Lys-6' and 'Lys-27'-linked polyubiquitination by RNF6 modulates AR transcriptional activity and specificity. Palmitoylated by ZDHHC7 and ZDHHC21. Palmitoylation is required for plasma membrane targeting and for rapid intracellular signaling via ERK and AKT kinases and cAMP generation.

It is found in the nucleus. Its subcellular location is the cytoplasm. Steroid hormone receptors are ligand-activated transcription factors that regulate eukaryotic gene expression and affect cellular proliferation and differentiation in target tissues. Transcription factor activity is modulated by bound coactivator and corepressor proteins like ZBTB7A that recruits NCOR1 and NCOR2 to the androgen response elements/ARE on target genes, negatively regulating androgen receptor signaling and androgen-induced cell proliferation. Transcription activation is also down-regulated by NR0B2. Activated, but not phosphorylated, by HIPK3 and ZIPK/DAPK3. The chain is Androgen receptor (AR) from Pan troglodytes (Chimpanzee).